The primary structure comprises 105 residues: Met repressor (105 aa).

Belongs to the MetJ family. In terms of assembly, homodimer.

It localises to the cytoplasm. Functionally, this regulatory protein, when combined with SAM (S-adenosylmethionine) represses the expression of the methionine regulon and of enzymes involved in SAM synthesis. The polypeptide is Met repressor (Yersinia enterocolitica serotype O:8 / biotype 1B (strain NCTC 13174 / 8081)).